A 177-amino-acid polypeptide reads, in one-letter code: GTP-dependent dephospho-CoA kinase (177 aa).

Residues glycine 25, tyrosine 31, aspartate 48, valine 49, valine 50, aspartate 67, lysine 69, glutamate 124, and aspartate 147 each contribute to the GTP site.

The protein belongs to the GTP-dependent DPCK family. In terms of assembly, monomer in solution.

It carries out the reaction 3'-dephospho-CoA + GTP = GDP + CoA + H(+). It participates in cofactor biosynthesis; coenzyme A biosynthesis. Functionally, catalyzes the GTP-dependent phosphorylation of the 3'-hydroxyl group of dephosphocoenzyme A to form coenzyme A (CoA). Can also use UTP, with lower efficiency and has weak activity with ATP, but shows a strong preference for GTP as the phosphate donor. In Thermococcus kodakarensis (strain ATCC BAA-918 / JCM 12380 / KOD1) (Pyrococcus kodakaraensis (strain KOD1)), this protein is GTP-dependent dephospho-CoA kinase.